A 220-amino-acid chain; its full sequence is Heptaprenyl diphosphate synthase component 1 (220 aa).

Heterodimer of component I and II.

It catalyses the reaction 4 isopentenyl diphosphate + (2E,6E)-farnesyl diphosphate = all-trans-heptaprenyl diphosphate + 4 diphosphate. Functionally, supplies heptaprenyl diphosphate, the precursor for the side chain of the isoprenoid quinone menaquinone-7 (MQ-7). This Geobacillus stearothermophilus (Bacillus stearothermophilus) protein is Heptaprenyl diphosphate synthase component 1 (hepS).